The sequence spans 301 residues: MSEHDMHLLDSAPFGRILPAMVTPMKSDGSVDFAAAQKLAKYLVADGADGLVVNGTTGESPVTHMDEKVELVRAVKEVVDVPVISGAGSNDTAHTVRMVEQTQEAGADAVLVVMPYYSRPSQDGIVGHYKAVDESAEKPIIVYDVPGRTGLKVKVGTYDRLAELEHVKAVKDATGDLAAAVEKQQRTGLAWYSGDDGLFLPFLSIGAVGIISVIAHVASNPMQQLVQAFDRGDITTARRLANQLAPLVHALNGDGYQAVMAKAALKVKGVIPSTTMRLPNIGPDATQLDKAEEGMRAAGLL.

Position 57 (Thr57) interacts with pyruvate. Residue Tyr143 is the Proton donor/acceptor of the active site. Catalysis depends on Lys171, which acts as the Schiff-base intermediate with substrate. Ile211 is a pyruvate binding site.

This sequence belongs to the DapA family. In terms of assembly, homotetramer; dimer of dimers.

It is found in the cytoplasm. The catalysed reaction is L-aspartate 4-semialdehyde + pyruvate = (2S,4S)-4-hydroxy-2,3,4,5-tetrahydrodipicolinate + H2O + H(+). Its pathway is amino-acid biosynthesis; L-lysine biosynthesis via DAP pathway; (S)-tetrahydrodipicolinate from L-aspartate: step 3/4. In terms of biological role, catalyzes the condensation of (S)-aspartate-beta-semialdehyde [(S)-ASA] and pyruvate to 4-hydroxy-tetrahydrodipicolinate (HTPA). The protein is 4-hydroxy-tetrahydrodipicolinate synthase of Bifidobacterium longum (strain DJO10A).